Here is a 151-residue protein sequence, read N- to C-terminus: Small ribosomal subunit protein uS15 (151 aa).

This sequence belongs to the universal ribosomal protein uS15 family. As to quaternary structure, component of the small ribosomal subunit. Part of the small subunit (SSU) processome, composed of more than 70 proteins and the RNA chaperone small nucleolar RNA (snoRNA) U3.

The protein resides in the cytoplasm. The protein localises to the nucleus. Its subcellular location is the nucleolus. In terms of biological role, component of the small ribosomal subunit. The ribosome is a large ribonucleoprotein complex responsible for the synthesis of proteins in the cell. Part of the small subunit (SSU) processome, first precursor of the small eukaryotic ribosomal subunit. During the assembly of the SSU processome in the nucleolus, many ribosome biogenesis factors, an RNA chaperone and ribosomal proteins associate with the nascent pre-rRNA and work in concert to generate RNA folding, modifications, rearrangements and cleavage as well as targeted degradation of pre-ribosomal RNA by the RNA exosome. This is Small ribosomal subunit protein uS15 (rps-13) from Caenorhabditis elegans.